Reading from the N-terminus, the 311-residue chain is Burkholderia TALE-like protein 3 (311 aa).

The Cryptic repeat -1 repeat unit spans residues 19–50 (LSPFECLKIEKHSGGADALEFISNKYDALTQV). The Cryptic repeat 0 repeat unit spans residues 51-83 (LSRADILKIACHDCAAHALQAVLDYEQVFRQRG). 6 Core repeat repeats span residues 84-116 (FARADIIKITGNGGGAQALKAVVVHGPTLNECG), 117-149 (FSQADIVRIADNIGGAQALKAVLEHGPTLNERD), 150-182 (YSGADIVKIAGNGGGARALKAVVMHGPTLCESG), 183-215 (YSGADIVKIASNGGGAQALEAVAMHGSTLCERG), 216-248 (YCRTDIAKIAGNGGGAQALKAIVMHGPTLCERG), and 249-281 (YSRTDIVKIADNNGGAQALKAVFEHGPALTQAG). Residues 282–311 (RSNEDIVNMAARTGAAGQIRKMAAQLSGRQ) form a Cryptic repeat +1 repeat.

The protein belongs to the transcription activator-like effector (TALE) family. Bat subfamily.

Does not bind DNA, probably because it has too few core repeats. This chain is Burkholderia TALE-like protein 3, found in Mycetohabitans rhizoxinica (strain DSM 19002 / CIP 109453 / HKI 454) (Paraburkholderia rhizoxinica).